A 94-amino-acid polypeptide reads, in one-letter code: ATP synthase F(0) complex subunit f, mitochondrial (94 aa).

Ala2 is subject to N-acetylalanine. Phosphoserine is present on Ser3. Position 22 is an N6-acetyllysine (Lys22). Residues 68–85 (MVLACYVLFSYSFSYKHL) form a helical membrane-spanning segment.

It belongs to the ATPase F chain family. As to quaternary structure, component of the ATP synthase complex composed at least of ATP5F1A/subunit alpha, ATP5F1B/subunit beta, ATP5MC1/subunit c (homooctomer), MT-ATP6/subunit a, MT-ATP8/subunit 8, ATP5ME/subunit e, ATP5MF/subunit f, ATP5MG/subunit g, ATP5MK/subunit k, ATP5MJ/subunit j, ATP5F1C/subunit gamma, ATP5F1D/subunit delta, ATP5F1E/subunit epsilon, ATP5PF/subunit F6, ATP5PB/subunit b, ATP5PD/subunit d, ATP5PO/subunit OSCP. ATP synthase complex consists of a soluble F(1) head domain (subunits alpha(3) and beta(3)) - the catalytic core - and a membrane F(0) domain - the membrane proton channel (subunits c, a, 8, e, f, g, k and j). These two domains are linked by a central stalk (subunits gamma, delta, and epsilon) rotating inside the F1 region and a stationary peripheral stalk (subunits F6, b, d, and OSCP).

The protein resides in the mitochondrion. The protein localises to the mitochondrion inner membrane. Subunit f, of the mitochondrial membrane ATP synthase complex (F(1)F(0) ATP synthase or Complex V) that produces ATP from ADP in the presence of a proton gradient across the membrane which is generated by electron transport complexes of the respiratory chain. ATP synthase complex consist of a soluble F(1) head domain - the catalytic core - and a membrane F(1) domain - the membrane proton channel. These two domains are linked by a central stalk rotating inside the F(1) region and a stationary peripheral stalk. During catalysis, ATP synthesis in the catalytic domain of F(1) is coupled via a rotary mechanism of the central stalk subunits to proton translocation. In vivo, can only synthesize ATP although its ATP hydrolase activity can be activated artificially in vitro. Part of the complex F(0) domain. This is ATP synthase F(0) complex subunit f, mitochondrial from Homo sapiens (Human).